The following is a 361-amino-acid chain: Peptide chain release factor 1 (361 aa).

Q237 bears the N5-methylglutamine mark. Positions 287-297 are enriched in basic and acidic residues; the sequence is KQQKEQSDTRK. The tract at residues 287–313 is disordered; sequence KQQKEQSDTRKSLVGSGDRSERIRTYN.

Belongs to the prokaryotic/mitochondrial release factor family. Post-translationally, methylated by PrmC. Methylation increases the termination efficiency of RF1.

It localises to the cytoplasm. In terms of biological role, peptide chain release factor 1 directs the termination of translation in response to the peptide chain termination codons UAG and UAA. The sequence is that of Peptide chain release factor 1 from Francisella tularensis subsp. holarctica (strain FTNF002-00 / FTA).